A 473-amino-acid chain; its full sequence is Bestrophin-4 (473 aa).

Residues 1–31 (MTVSYTLKVAEARFGGFSGLLLRWRGSIYKL) lie on the Cytoplasmic side of the membrane. Position 10 (Ala10) interacts with Ca(2+). A helical membrane pass occupies residues 32–51 (LYKEFLLFGALYAVLSITYR). At 52–60 (LLLTQEQRY) the chain is on the extracellular side. A helical transmembrane segment spans residues 61-82 (VYAQVARYCNRSADLIPLSFVL). The Cytoplasmic portion of the chain corresponds to 83 to 237 (GFYVTLVVNR…DWISIPLVYT (155 aa)). The helical transmembrane segment at 238 to 255 (QVVTIAVYSFFALSLVGR) threads the bilayer. At 256–289 (QFVEPEAGAAKPQKLLKPGQEPAPALGDPDMYVP) the chain is on the extracellular side. Residues 290–303 (LTTLLQFFFYAGWL) form a helical membrane-spanning segment. The Cytoplasmic segment spans residues 304–473 (KVAEQIINPF…AESGDEALEP (170 aa)). Ca(2+) contacts are provided by Gln308, Asn311, Asp316, and Asp319. Disordered stretches follow at residues 379 to 408 (TFNL…PAAQ) and 428 to 473 (RNFG…ALEP). Residues 396-407 (ASPGSGRPAPAA) are compositionally biased toward low complexity. Residues 445–461 (FRAEEGGDPEAAARIEE) show a composition bias toward basic and acidic residues. Over residues 462-473 (ESAESGDEALEP) the composition is skewed to acidic residues.

Belongs to the anion channel-forming bestrophin (TC 1.A.46) family. Calcium-sensitive chloride channel subfamily. In terms of tissue distribution, predominantly found in colon and the weakly in fetal brain, spinal cord, retina, lung, trachea, testis and placenta.

It localises to the cell membrane. The enzyme catalyses chloride(in) = chloride(out). The catalysed reaction is hydrogencarbonate(in) = hydrogencarbonate(out). Its function is as follows. Ligand-gated anion channel that allows the movement of anions across cell membranes when activated by Calcium (Ca2+). Mediates the movement of hydrogencarbonate and chloride. This is Bestrophin-4 from Homo sapiens (Human).